We begin with the raw amino-acid sequence, 540 residues long: Ribonuclease Y (540 aa).

Residues 4–24 form a helical membrane-spanning segment; the sequence is TILVPVAVAIVSVLVGGCAGY. One can recognise a KH domain in the interval 230 to 293; it reads TVSVVNLPND…EIAKRALERL (64 aa). The region spanning 356 to 449 is the HD domain; the sequence is VLSHSIEVGK…VVAADTISSA (94 aa).

This sequence belongs to the RNase Y family.

It localises to the cell membrane. Functionally, endoribonuclease that initiates mRNA decay. This chain is Ribonuclease Y, found in Lactobacillus gasseri (strain ATCC 33323 / DSM 20243 / BCRC 14619 / CIP 102991 / JCM 1131 / KCTC 3163 / NCIMB 11718 / NCTC 13722 / AM63).